Here is a 252-residue protein sequence, read N- to C-terminus: Small ribosomal subunit protein uS3 (252 aa).

The KH type-2 domain maps to 39–111; sequence IRKLINNFAK…EVNLNVLEVK (73 aa). The segment at 222–252 is disordered; sequence KPFASQSSNTPNRRPRNFKGGNNNHVNAKKN. Residues 241-252 are compositionally biased toward polar residues; sequence GGNNNHVNAKKN.

The protein belongs to the universal ribosomal protein uS3 family. As to quaternary structure, part of the 30S ribosomal subunit. Forms a tight complex with proteins S10 and S14.

Functionally, binds the lower part of the 30S subunit head. Binds mRNA in the 70S ribosome, positioning it for translation. This chain is Small ribosomal subunit protein uS3, found in Phytoplasma sp. (strain STRAWB2).